Here is a 95-residue protein sequence, read N- to C-terminus: Aspartyl/glutamyl-tRNA(Asn/Gln) amidotransferase subunit C (95 aa).

This sequence belongs to the GatC family. As to quaternary structure, heterotrimer of A, B and C subunits.

It carries out the reaction L-glutamyl-tRNA(Gln) + L-glutamine + ATP + H2O = L-glutaminyl-tRNA(Gln) + L-glutamate + ADP + phosphate + H(+). The enzyme catalyses L-aspartyl-tRNA(Asn) + L-glutamine + ATP + H2O = L-asparaginyl-tRNA(Asn) + L-glutamate + ADP + phosphate + 2 H(+). Allows the formation of correctly charged Asn-tRNA(Asn) or Gln-tRNA(Gln) through the transamidation of misacylated Asp-tRNA(Asn) or Glu-tRNA(Gln) in organisms which lack either or both of asparaginyl-tRNA or glutaminyl-tRNA synthetases. The reaction takes place in the presence of glutamine and ATP through an activated phospho-Asp-tRNA(Asn) or phospho-Glu-tRNA(Gln). This Methylobacillus flagellatus (strain ATCC 51484 / DSM 6875 / VKM B-1610 / KT) protein is Aspartyl/glutamyl-tRNA(Asn/Gln) amidotransferase subunit C.